Reading from the N-terminus, the 337-residue chain is Phosphoribosylformylglycinamidine cyclo-ligase (337 aa).

Belongs to the AIR synthase family.

The protein resides in the cytoplasm. The catalysed reaction is 2-formamido-N(1)-(5-O-phospho-beta-D-ribosyl)acetamidine + ATP = 5-amino-1-(5-phospho-beta-D-ribosyl)imidazole + ADP + phosphate + H(+). It participates in purine metabolism; IMP biosynthesis via de novo pathway; 5-amino-1-(5-phospho-D-ribosyl)imidazole from N(2)-formyl-N(1)-(5-phospho-D-ribosyl)glycinamide: step 2/2. This is Phosphoribosylformylglycinamidine cyclo-ligase from Gloeobacter violaceus (strain ATCC 29082 / PCC 7421).